Here is a 115-residue protein sequence, read N- to C-terminus: uncharacterized protein (115 aa).

The disordered stretch occupies residues glutamate 9–isoleucine 30.

This is an uncharacterized protein from Saccharomyces cerevisiae (strain ATCC 204508 / S288c) (Baker's yeast).